The primary structure comprises 531 residues: Importin subunit alpha-2 (531 aa).

A compositionally biased stretch (polar residues) spans 1–10 (MTLTETSLSH). Positions 1-88 (MTLTETSLSH…ISHQQSSTRL (88 aa)) are disordered. Residues 5–67 (ETSLSHNAEE…RNIVDVDEGG (63 aa)) enclose the IBB domain. 2 stretches are compositionally biased toward basic and acidic residues: residues 11-20 (NAEEGKDEGG) and 29-50 (TKHEELRRRRTECSVEIRKQKG). Over residues 62-75 (DVDEGGNSESELEE) the composition is skewed to acidic residues. ARM repeat units lie at residues 122–161 (NPPIDEVIHCGLLQALVQALSVENERVQYEAAWALTNIVS), 164–203 (TEQTIAAVEAGVTIPLIHLSVHQSAQISEQALWAVANIAG), 250–290 (KNPH…YLTD), 293–331 (DEQIELARESGVLPHVVAFFKEAENLVAPALRTLGNVAT), 334–374 (DSLT…NIIA), 377–416 (QKQIQAVLDANLLPVLINVLKSGDHKCQFEASWALSNLAQ), and 420–459 (NRQVVAMLEDNVVPALCQALLQTNTDMLNNTLETLYTLML). Residues 511-531 (DDAGEKESHENADPQDNKWSF) form a disordered region. Over residues 515-531 (EKESHENADPQDNKWSF) the composition is skewed to basic and acidic residues.

Belongs to the importin alpha family. In terms of assembly, forms a complex with an importin beta subunit. Interacts with akir-1. As to expression, germline tissues. Expressed exclusively in germ line cells from the early embryonic through adult stages.

It is found in the cytoplasm. Its subcellular location is the nucleus. The protein localises to the nucleus envelope. Functionally, nuclear transport receptor that mediates nuclear import of proteins, and which is involved in sister chromatid cohesion. Binds specifically and directly to substrates containing either a simple or bipartite nuclear localization signals (NLS) motif. Promotes docking of import substrates to the nuclear envelope. Together with akir-1 adapter, required for the import and load of cohesin complex proteins in meiotic nuclei. This chain is Importin subunit alpha-2, found in Caenorhabditis elegans.